The primary structure comprises 295 residues: Pyridoxal 5'-phosphate synthase subunit PdxS (295 aa).

D25 contributes to the D-ribose 5-phosphate binding site. The active-site Schiff-base intermediate with D-ribose 5-phosphate is the K82. Residue G154 participates in D-ribose 5-phosphate binding. Residue R166 participates in D-glyceraldehyde 3-phosphate binding. D-ribose 5-phosphate-binding positions include G215 and 236 to 237; that span reads GS.

This sequence belongs to the PdxS/SNZ family. As to quaternary structure, in the presence of PdxT, forms a dodecamer of heterodimers.

It carries out the reaction aldehydo-D-ribose 5-phosphate + D-glyceraldehyde 3-phosphate + L-glutamine = pyridoxal 5'-phosphate + L-glutamate + phosphate + 3 H2O + H(+). The protein operates within cofactor biosynthesis; pyridoxal 5'-phosphate biosynthesis. In terms of biological role, catalyzes the formation of pyridoxal 5'-phosphate from ribose 5-phosphate (RBP), glyceraldehyde 3-phosphate (G3P) and ammonia. The ammonia is provided by the PdxT subunit. Can also use ribulose 5-phosphate and dihydroxyacetone phosphate as substrates, resulting from enzyme-catalyzed isomerization of RBP and G3P, respectively. The protein is Pyridoxal 5'-phosphate synthase subunit PdxS of Staphylococcus aureus (strain Mu3 / ATCC 700698).